The primary structure comprises 369 residues: Histidinol-phosphate aminotransferase (369 aa).

Lys223 bears the N6-(pyridoxal phosphate)lysine mark.

The protein belongs to the class-II pyridoxal-phosphate-dependent aminotransferase family. Histidinol-phosphate aminotransferase subfamily. In terms of assembly, homodimer. It depends on pyridoxal 5'-phosphate as a cofactor.

It carries out the reaction L-histidinol phosphate + 2-oxoglutarate = 3-(imidazol-4-yl)-2-oxopropyl phosphate + L-glutamate. The protein operates within amino-acid biosynthesis; L-histidine biosynthesis; L-histidine from 5-phospho-alpha-D-ribose 1-diphosphate: step 7/9. The sequence is that of Histidinol-phosphate aminotransferase from Shouchella clausii (strain KSM-K16) (Alkalihalobacillus clausii).